Consider the following 131-residue polypeptide: Classical arabinogalactan protein 2 (131 aa).

The first 21 residues, 1 to 21, serve as a signal peptide directing secretion; sequence MNSKAMQALIFLGFLATSCLA. Glutamine 22 is modified (pyrrolidone carboxylic acid). Residues proline 24, proline 26, proline 28, proline 34, and proline 35 each carry the 4-hydroxyproline modification. Residues proline 24, proline 26, proline 28, proline 34, and proline 35 are each glycosylated (O-linked (Ara...) hydroxyproline). The tract at residues 24–106 is disordered; the sequence is PAPAPTTVTP…PGPDGAADAP (83 aa). Pro residues-rich tracts occupy residues 25-38 and 49-64; these read APAPTTVTPPPTAL and IASPPVPVNEPTPAPT. Composition is skewed to low complexity over residues 65 to 76 and 90 to 106; these read TSPTTSPVASPP and TPTSSPAPGPDGAADAP. Serine 107 is lipidated: GPI-anchor amidated serine. The propeptide at 108 to 131 is removed in mature form; the sequence is AAWANKAFLVGTAVAGALYAVVLA.

It belongs to the classical AGP family. O-glycosylated on hydroxyprolines; noncontiguous hydroxylproline residues are glycosylated with arabinogalactan.

The protein localises to the cell membrane. Its function is as follows. Proteoglycan that seems to be implicated in diverse developmental roles such as differentiation, cell-cell recognition, embryogenesis and programmed cell death. This Arabidopsis thaliana (Mouse-ear cress) protein is Classical arabinogalactan protein 2 (AGP2).